The primary structure comprises 314 residues: MAPALPFALPSLAGKVYLVTGGNTGVGFHTVDELAKHGARVYMGARSPGKAEAAIKTIRAETPTADVHFLQMDLMDLHSVVAAAKSFKEKETKLHGLVNNAGIMATPYALSGDGFEAQWQTNYLSHWVLTWHLLDVLVRTLQAEGGAAGSVRVVDVTSDGHNFAPKVGIDFKDINLEKAGVFARYGQSKVGNILHAKQLNKLYGPSGSETAKKGIWTAAVHPGHLDTNLNKQTAFPKFVNTLLRAVGAYSPPRDGAFNSVFAVASPEFKVADSGEYFVPGQKKKQPSKVARDMELAGRLWKWTEEELRKRELLD.

Positions 26, 50, 73, 100, 185, and 189 each coordinate NADP(+). The active-site Proton acceptor is tyrosine 185. Residue lysine 189 is the Lowers pKa of active site Tyr of the active site.

This sequence belongs to the short-chain dehydrogenases/reductases (SDR) family.

It functions in the pathway secondary metabolite biosynthesis; terpenoid biosynthesis. Its function is as follows. Short-chain dehydrogenase/reductase; part of the gene cluster that mediates the biosynthesis of various drimane-type sesquiterpene esters, compounds that exhibit diverse biological activities and are widely present in eukaryotes. The pathway begins with the synthesis of the backbone drimenol by the terpene cyclase drtB using farnesyl pyrophosphate (FPP) as substrate. The cytochrome P450 monooxygenase drtD is then responsible for the hydroxylations at C-6, C-9 and C-12, as well as the oxidation of hydroxyl groups at C-6 and C-11 to a ketone and an aldehyde, respectively. Then, the biosynthesis can go in two directions, either the hydroxylated drimenol is further hydroxylated at C-2 and C-3 by an enzyme(s) not associated with the drt cluster, or the FAD-binding oxidoreductase drtC further oxidizes C-11 or C-12 to form the butyrolactone ring. DrtB, drtD and drtC are solely responsible for the formation of the different drimane structures observed during drimane sesquiterpenes biosynthesis. The polyketide synthase drtA synthesizes different lengths (C6 and C8) of PKS chains, which are then oxidized to varying degrees by the short-chain dehydrogenase drtF. Finally, these PKS chains are transferred onto drimane sesquiterpenes by the acyltransferase drtE, forming the sesquiterpene esters. In addition to the different fatty acyl-CoA chains produced by drtA, drtE is also able to use cinnamoyl-CoA as a substrate. This is Short-chain dehydrogenase/reductase drtF from Aspergillus calidoustus.